The sequence spans 622 residues: MEDVEARFAHLLLPIRDLTRNWEVDVAAQLGEYLEELDQICISFDKGKTTMNFIEAALLIQGSACVYSKKVEYLYSLVYQALDFISGKKQAKQLSSTPEDGTIGDASSRAPQEAEQKFRALDDLSDSCANVDLRDDQVVSGTLIPLLPNALVAPDEMEKNSNPLYSCQGEVLASRKDFRVNTCTPHPRGTFLLEPLGVSLMEALQPWNPKEPGRAEEQPMEVSVCGSPGPALSTSQEPGSSPEGPVPRGGGVGEDEEDAEGAAEPPEASAPEVPMEPPEPRSPEQSVAQPRRYTLRERKEAPEPASRLKDTPDPWQGLDPFDSPDSKPFRKGRPYSVPPRVEEAPGQKRKRKGAVKLQDFHQWYLAAYADHTDSRRSRRKGPSFADMEVLYWKHVKEQLETLRKMQRREAAERWLPRAEQGLWPVEEDRLEDSVEDLGAADDFLEPEEYAEPEGAEPGEDADMEAEAMPASLRYEELVQRNVELFVTASKQDVFVTTSRQELVQETELKQHIRGWEDAIQSLLQEQEEHVPFDIHTYGDQVVSRFSQLNQWCPFAKLVAGQPAFEVCRSMLASLQLANDYTVEITQQPGLEAAVDTMSLRLLTHQRARQRFQTYAAPSTVQP.

Thr19 carries the phosphothreonine modification. Phosphoserine occurs at positions 95, 199, 223, and 227. The interval 207–354 (WNPKEPGRAE…PGQKRKRKGA (148 aa)) is disordered. Positions 262–273 (AAEPPEASAPEV) are enriched in low complexity. Ser282 carries the phosphoserine modification. Over residues 294–312 (TLRERKEAPEPASRLKDTP) the composition is skewed to basic and acidic residues.

The protein belongs to the CND2 H2 (condensin-2 subunit 2) family. As to quaternary structure, component of the condensin-2 complex, which contains the SMC2 and SMC4 heterodimer, and three non SMC subunits, NCAPG2, NCAPH2 and NCAPD3 that probably regulate the complex.

The protein localises to the nucleus. Functionally, regulatory subunit of the condensin-2 complex, a complex that seems to provide chromosomes with an additional level of organization and rigidity and in establishing mitotic chromosome architecture. May promote the resolution of double-strand DNA catenanes (intertwines) between sister chromatids. Condensin-mediated compaction likely increases tension in catenated sister chromatids, providing directionality for type II topoisomerase-mediated strand exchanges toward chromatid decatenation. Required for decatenation of chromatin bridges at anaphase. Early in neurogenesis, may play an essential role to ensure accurate mitotic chromosome condensation in neuron stem cells, ultimately affecting neuron pool and cortex size. Seems to have lineage-specific role in T-cell development. The sequence is that of Condensin-2 complex subunit H2 (NCAPH2) from Bos taurus (Bovine).